Here is a 332-residue protein sequence, read N- to C-terminus: Ornithine carbamoyltransferase, catabolic (332 aa).

Carbamoyl phosphate is bound by residues 60–63, Gln87, Arg111, and 138–141; these read STRT and HPTQ. Residues Asn170, Asp230, and 234–235 contribute to the L-ornithine site; that span reads SM. Carbamoyl phosphate-binding positions include 271–272 and Arg316; that span reads CL.

The protein belongs to the aspartate/ornithine carbamoyltransferase superfamily. OTCase family.

It localises to the cytoplasm. The enzyme catalyses carbamoyl phosphate + L-ornithine = L-citrulline + phosphate + H(+). The protein operates within amino-acid degradation; L-arginine degradation via ADI pathway; carbamoyl phosphate from L-arginine: step 2/2. Reversibly catalyzes the transfer of the carbamoyl group from carbamoyl phosphate (CP) to the N(epsilon) atom of ornithine (ORN) to produce L-citrulline. This Bacillus cereus (strain ATCC 14579 / DSM 31 / CCUG 7414 / JCM 2152 / NBRC 15305 / NCIMB 9373 / NCTC 2599 / NRRL B-3711) protein is Ornithine carbamoyltransferase, catabolic (arcB).